Here is a 364-residue protein sequence, read N- to C-terminus: Anthranilate phosphoribosyltransferase (364 aa).

Residues 1–10 (MTSGPSQPFP) are compositionally biased toward polar residues. The disordered stretch occupies residues 1–22 (MTSGPSQPFPSASGPDDGPSWP). Residues Gly101, 104–105 (GD), Thr109, 111–114 (NLST), 129–137 (KHGNRAASS), and Gly141 contribute to the 5-phospho-alpha-D-ribose 1-diphosphate site. Position 101 (Gly101) interacts with anthranilate. Ser113 provides a ligand contact to Mg(2+). Asn132 provides a ligand contact to anthranilate. Arg187 provides a ligand contact to anthranilate. Residues Asp245 and Glu246 each contribute to the Mg(2+) site.

Belongs to the anthranilate phosphoribosyltransferase family. In terms of assembly, homodimer. Requires Mg(2+) as cofactor.

The catalysed reaction is N-(5-phospho-beta-D-ribosyl)anthranilate + diphosphate = 5-phospho-alpha-D-ribose 1-diphosphate + anthranilate. Its pathway is amino-acid biosynthesis; L-tryptophan biosynthesis; L-tryptophan from chorismate: step 2/5. Functionally, catalyzes the transfer of the phosphoribosyl group of 5-phosphorylribose-1-pyrophosphate (PRPP) to anthranilate to yield N-(5'-phosphoribosyl)-anthranilate (PRA). The sequence is that of Anthranilate phosphoribosyltransferase from Mycolicibacterium smegmatis (strain ATCC 700084 / mc(2)155) (Mycobacterium smegmatis).